Consider the following 258-residue polypeptide: Venom plasminogen activator GPV-PA (258 aa).

The first 18 residues, Met-1–Ala-18, serve as a signal peptide directing secretion. Residues Gln-19 to Leu-24 constitute a propeptide that is removed on maturation. The Peptidase S1 domain maps to Val-25–Ala-249. Cystine bridges form between Cys-31–Cys-163, Cys-50–Cys-66, Cys-98–Cys-256, Cys-142–Cys-210, Cys-174–Cys-189, and Cys-200–Cys-225. Asn-44 carries an N-linked (GlcNAc...) asparagine glycan. Residues His-65 and Asp-110 each act as charge relay system in the active site. N-linked (GlcNAc...) asparagine glycans are attached at residues Asn-121 and Asn-185. Ser-204 (charge relay system) is an active-site residue.

Belongs to the peptidase S1 family. Snake venom subfamily. In terms of assembly, monomer. As to expression, expressed by the venom gland.

The protein localises to the secreted. Its function is as follows. Snake venom serine protease that activates plasminogen. This Trimeresurus albolabris (White-lipped pit viper) protein is Venom plasminogen activator GPV-PA.